We begin with the raw amino-acid sequence, 534 residues long: Bifunctional pantoate ligase/cytidylate kinase (534 aa).

Positions 1-302 are pantoate--beta-alanine ligase; the sequence is MRLLTTVAAL…LGSTRLIDNT (302 aa). 48–55 provides a ligand contact to ATP; that stretch reads MGSLHQGH. His-55 serves as the catalytic Proton donor. (R)-pantoate is bound at residue Gln-79. Position 79 (Gln-79) interacts with beta-alanine. 172–175 is a binding site for ATP; it reads GQKD. Gln-178 provides a ligand contact to (R)-pantoate. ATP-binding positions include Val-201 and 209–212; that span reads CSSR. The segment at 303 to 534 is cytidylate kinase; sequence ILRDRQPIIA…DYYQQRLSQW (232 aa).

It in the N-terminal section; belongs to the pantothenate synthetase family. This sequence in the C-terminal section; belongs to the cytidylate kinase family. Type 1 subfamily.

The protein localises to the cytoplasm. The catalysed reaction is (R)-pantoate + beta-alanine + ATP = (R)-pantothenate + AMP + diphosphate + H(+). It carries out the reaction CMP + ATP = CDP + ADP. It catalyses the reaction dCMP + ATP = dCDP + ADP. Its pathway is cofactor biosynthesis; (R)-pantothenate biosynthesis; (R)-pantothenate from (R)-pantoate and beta-alanine: step 1/1. In terms of biological role, catalyzes the condensation of pantoate with beta-alanine in an ATP-dependent reaction via a pantoyl-adenylate intermediate. Catalyzes the transfer of a phosphate group from ATP to either CMP or dCMP to form CDP or dCDP and ADP, respectively. This Nostoc sp. (strain PCC 7120 / SAG 25.82 / UTEX 2576) protein is Bifunctional pantoate ligase/cytidylate kinase.